The following is a 432-amino-acid chain: Adenylosuccinate synthetase (432 aa).

GTP-binding positions include 12–18 (GDEGKGK) and 40–42 (GHT). Asp-13 acts as the Proton acceptor in catalysis. Asp-13 and Gly-40 together coordinate Mg(2+). IMP is bound by residues 13 to 16 (DEGK), 38 to 41 (NAGH), Thr-132, Arg-146, Gln-226, Thr-241, and Arg-305. The active-site Proton donor is the His-41. 301–307 (TVTGRKR) is a substrate binding site. GTP contacts are provided by residues Arg-307, 333–335 (KLD), and 415–417 (STS).

It belongs to the adenylosuccinate synthetase family. In terms of assembly, homodimer. The cofactor is Mg(2+).

It localises to the cytoplasm. It carries out the reaction IMP + L-aspartate + GTP = N(6)-(1,2-dicarboxyethyl)-AMP + GDP + phosphate + 2 H(+). Its pathway is purine metabolism; AMP biosynthesis via de novo pathway; AMP from IMP: step 1/2. In terms of biological role, plays an important role in the de novo pathway of purine nucleotide biosynthesis. Catalyzes the first committed step in the biosynthesis of AMP from IMP. The polypeptide is Adenylosuccinate synthetase (Agrobacterium fabrum (strain C58 / ATCC 33970) (Agrobacterium tumefaciens (strain C58))).